Consider the following 239-residue polypeptide: Phosphoglycolate phosphatase (239 aa).

Aspartate 14 functions as the Nucleophile in the catalytic mechanism. Residues aspartate 14 and aspartate 16 each contribute to the Mg(2+) site. Lysine 160 contributes to the substrate binding site. Residues aspartate 183 and aspartate 187 each coordinate Mg(2+).

The protein belongs to the archaeal SPP-like hydrolase family. Mg(2+) is required as a cofactor.

The enzyme catalyses 2-phosphoglycolate + H2O = glycolate + phosphate. Functionally, catalyzes the dephosphorylation of 2-phosphoglycolate. The polypeptide is Phosphoglycolate phosphatase (Aeropyrum pernix (strain ATCC 700893 / DSM 11879 / JCM 9820 / NBRC 100138 / K1)).